The sequence spans 150 residues: Large ribosomal subunit protein bL9 (150 aa).

This sequence belongs to the bacterial ribosomal protein bL9 family.

In terms of biological role, binds to the 23S rRNA. The protein is Large ribosomal subunit protein bL9 of Shewanella halifaxensis (strain HAW-EB4).